The chain runs to 218 residues: Small ribosomal subunit protein uS7 (218 aa).

This sequence belongs to the universal ribosomal protein uS7 family. Part of the 30S ribosomal subunit.

One of the primary rRNA binding proteins, it binds directly to 16S rRNA where it nucleates assembly of the head domain of the 30S subunit. Is located at the subunit interface close to the decoding center. The sequence is that of Small ribosomal subunit protein uS7 (rps7) from Pyrococcus horikoshii (strain ATCC 700860 / DSM 12428 / JCM 9974 / NBRC 100139 / OT-3).